Here is a 192-residue protein sequence, read N- to C-terminus: Elongation factor P (192 aa).

Belongs to the elongation factor P family.

The protein localises to the cytoplasm. The protein operates within protein biosynthesis; polypeptide chain elongation. Functionally, involved in peptide bond synthesis. Stimulates efficient translation and peptide-bond synthesis on native or reconstituted 70S ribosomes in vitro. Probably functions indirectly by altering the affinity of the ribosome for aminoacyl-tRNA, thus increasing their reactivity as acceptors for peptidyl transferase. This Borreliella burgdorferi (strain ATCC 35210 / DSM 4680 / CIP 102532 / B31) (Borrelia burgdorferi) protein is Elongation factor P (efp).